The sequence spans 189 residues: Protein GrpE (189 aa).

Residues 1-37 form a disordered region; it reads MSDSSKEKKKKFADMVSRQKGDDQQSDNHKQTDDLNE. Residues 17 to 33 are compositionally biased toward basic and acidic residues; the sequence is SRQKGDDQQSDNHKQTD.

This sequence belongs to the GrpE family. In terms of assembly, homodimer.

It is found in the cytoplasm. Participates actively in the response to hyperosmotic and heat shock by preventing the aggregation of stress-denatured proteins, in association with DnaK and GrpE. It is the nucleotide exchange factor for DnaK and may function as a thermosensor. Unfolded proteins bind initially to DnaJ; upon interaction with the DnaJ-bound protein, DnaK hydrolyzes its bound ATP, resulting in the formation of a stable complex. GrpE releases ADP from DnaK; ATP binding to DnaK triggers the release of the substrate protein, thus completing the reaction cycle. Several rounds of ATP-dependent interactions between DnaJ, DnaK and GrpE are required for fully efficient folding. This is Protein GrpE from Wolbachia sp. subsp. Drosophila simulans (strain wRi).